We begin with the raw amino-acid sequence, 184 residues long: Large ribosomal subunit protein eL13 (184 aa).

Residues 28-53 (PARKERRRQARKAKAQRIAPRPASGP) form a disordered region. Basic residues predominate over residues 31-42 (KERRRQARKAKA).

Belongs to the eukaryotic ribosomal protein eL13 family.

The polypeptide is Large ribosomal subunit protein eL13 (RPL13) (Schistosoma mansoni (Blood fluke)).